The primary structure comprises 357 residues: 3-dehydroquinate synthase (357 aa).

Residues 126–127 (TT), lysine 139, and lysine 148 each bind NAD(+). Zn(2+)-binding residues include glutamate 181, histidine 244, and histidine 261.

It belongs to the sugar phosphate cyclases superfamily. Dehydroquinate synthase family. Co(2+) serves as cofactor. Zn(2+) is required as a cofactor. It depends on NAD(+) as a cofactor.

The protein localises to the cytoplasm. The catalysed reaction is 7-phospho-2-dehydro-3-deoxy-D-arabino-heptonate = 3-dehydroquinate + phosphate. Its pathway is metabolic intermediate biosynthesis; chorismate biosynthesis; chorismate from D-erythrose 4-phosphate and phosphoenolpyruvate: step 2/7. Its function is as follows. Catalyzes the conversion of 3-deoxy-D-arabino-heptulosonate 7-phosphate (DAHP) to dehydroquinate (DHQ). In Solibacter usitatus (strain Ellin6076), this protein is 3-dehydroquinate synthase.